Reading from the N-terminus, the 521-residue chain is Formate--tetrahydrofolate ligase (521 aa).

This sequence belongs to the formate--tetrahydrofolate ligase family.

The enzyme catalyses (6S)-5,6,7,8-tetrahydrofolate + formate + ATP = (6R)-10-formyltetrahydrofolate + ADP + phosphate. The protein operates within one-carbon metabolism; tetrahydrofolate interconversion. The sequence is that of Formate--tetrahydrofolate ligase from Ureaplasma parvum serovar 3 (strain ATCC 700970).